The primary structure comprises 1433 residues: DNA-directed RNA polymerase subunit beta' (1433 aa).

Zn(2+) is bound by residues Cys66, Cys68, Cys81, and Cys84. Positions 328 to 347 are disordered; sequence RKSSAVKTDSNRPLKSLSDS. Polar residues predominate over residues 329–346; the sequence is KSSAVKTDSNRPLKSLSD. Asp477, Asp479, and Asp481 together coordinate Mg(2+). The Zn(2+) site is built by Cys825, Cys899, Cys906, and Cys909.

The protein belongs to the RNA polymerase beta' chain family. The RNAP catalytic core consists of 2 alpha, 1 beta, 1 beta' and 1 omega subunit. When a sigma factor is associated with the core the holoenzyme is formed, which can initiate transcription. Mg(2+) is required as a cofactor. The cofactor is Zn(2+).

The enzyme catalyses RNA(n) + a ribonucleoside 5'-triphosphate = RNA(n+1) + diphosphate. DNA-dependent RNA polymerase catalyzes the transcription of DNA into RNA using the four ribonucleoside triphosphates as substrates. The polypeptide is DNA-directed RNA polymerase subunit beta' (Christiangramia forsetii (strain DSM 17595 / CGMCC 1.15422 / KT0803) (Gramella forsetii)).